We begin with the raw amino-acid sequence, 250 residues long: HTH-type transcriptional regulator KipR (250 aa).

The region spanning 5–65 (NKTVVKSMAL…DASGAYSLGL (61 aa)) is the HTH iclR-type domain. The segment at residues 26 to 45 (LSELVSLTGMPKTSVHRMVS) is a DNA-binding region (H-T-H motif). One can recognise an IclR-ED domain in the interval 80 to 249 (IRKIAKPVME…ALQISRKIGY (170 aa)).

Its function is as follows. Transcriptional repressor of the kip gene-containing operon. This chain is HTH-type transcriptional regulator KipR (kipR), found in Bacillus subtilis (strain 168).